A 563-amino-acid polypeptide reads, in one-letter code: Lipase 1 (563 aa).

The first 19 residues, 1–19, serve as a signal peptide directing secretion; that stretch reads MVSKTFFLAAALNVVGTLA. Glutamine 20 is subject to Pyrrolidone carboxylic acid. An intrachain disulfide couples cysteine 80 to cysteine 124. Residue serine 236 is the Acyl-ester intermediate of the active site. Cysteines 295 and 307 form a disulfide. A glycan (N-linked (GlcNAc...) asparagine) is linked at asparagine 302. Glutamate 373 acts as the Charge relay system in catalysis. The N-linked (GlcNAc...) asparagine glycan is linked to asparagine 383. Histidine 482 acts as the Charge relay system in catalysis.

It belongs to the type-B carboxylesterase/lipase family. Monomer.

Its subcellular location is the secreted. The catalysed reaction is a triacylglycerol + H2O = a diacylglycerol + a fatty acid + H(+). Hydrolyzes all ester bonds in triglyceride and displays a high affinity for triolein. For unsaturated substrates having long fatty acyl chains (C18:2 cis-9, cis-12 and C18:3 cis-9, cis-12, cis-15) GCL I shows higher specific activity than GCL II, whereas GCL II shows higher specific activity against saturated substrates having short fatty acid chains (C8, C10, C12 and C14). The protein is Lipase 1 (LIP1) of Geotrichum candidum (Oospora lactis).